Here is a 145-residue protein sequence, read N- to C-terminus: Group IID secretory phospholipase A2 (145 aa).

A signal peptide spans 1-20 (MELALLCGLVVMAGVIPIQG). 7 cysteine pairs are disulfide-bonded: C46-C138, C48-C64, C63-C118, C69-C145, C70-C111, C79-C104, and C97-C109. Residues H47, G49, and G51 each contribute to the Ca(2+) site. H67 is an active-site residue. D68 is a Ca(2+) binding site. A glycan (N-linked (GlcNAc...) asparagine) is linked at N89. The active site involves D112.

It belongs to the phospholipase A2 family. Ca(2+) is required as a cofactor. As to expression, highly expressed in pancreas and spleen and less abundantly in colon, thymus, placenta, small intestine, and prostate.

The protein resides in the secreted. It carries out the reaction a 1,2-diacyl-sn-glycero-3-phosphoethanolamine + H2O = a 1-acyl-sn-glycero-3-phosphoethanolamine + a fatty acid + H(+). The enzyme catalyses 1-hexadecanoyl-2-(9Z-octadecenoyl)-sn-glycero-3-phosphoethanolamine + H2O = 1-hexadecanoyl-sn-glycero-3-phosphoethanolamine + (9Z)-octadecenoate + H(+). It catalyses the reaction 1-hexadecanoyl-2-(9Z,12Z-octadecadienoyl)-sn-glycero-3-phosphoethanolamine + H2O = 1-hexadecanoyl-sn-glycero-3-phosphoethanolamine + (9Z,12Z)-octadecadienoate + H(+). The catalysed reaction is 1,2-dihexadecanoyl-sn-glycero-3-phospho-(1'-sn-glycerol) + H2O = 1-hexadecanoyl-sn-glycero-3-phospho-(1'-sn-glycerol) + hexadecanoate + H(+). It carries out the reaction 1-hexadecanoyl-2-(9Z-octadecenoyl)-sn-glycero-3-phospho-(1'-sn-glycerol) + H2O = 1-hexadecanoyl-sn-glycero-3-phospho-(1'-sn-glycerol) + (9Z)-octadecenoate + H(+). The enzyme catalyses a 1,2-diacyl-sn-glycero-3-phosphocholine + H2O = a 1-acyl-sn-glycero-3-phosphocholine + a fatty acid + H(+). It catalyses the reaction 1,2-dihexadecanoyl-sn-glycero-3-phosphocholine + H2O = 1-hexadecanoyl-sn-glycero-3-phosphocholine + hexadecanoate + H(+). The catalysed reaction is 1-hexadecanoyl-2-(9Z-octadecenoyl)-sn-glycero-3-phosphocholine + H2O = 1-hexadecanoyl-sn-glycero-3-phosphocholine + (9Z)-octadecenoate + H(+). It carries out the reaction 1-hexadecanoyl-2-(9Z,12Z-octadecadienoyl)-sn-glycero-3-phosphocholine + H2O = (9Z,12Z)-octadecadienoate + 1-hexadecanoyl-sn-glycero-3-phosphocholine + H(+). The enzyme catalyses 1-hexadecanoyl-2-(4Z,7Z,10Z,13Z,16Z,19Z-docosahexaenoyl)-sn-glycero-3-phosphocholine + H2O = (4Z,7Z,10Z,13Z,16Z,19Z)-docosahexaenoate + 1-hexadecanoyl-sn-glycero-3-phosphocholine + H(+). In terms of biological role, secretory calcium-dependent phospholipase A2 that primarily targets extracellular lipids, exerting anti-inflammatory and immunosuppressive functions. Hydrolyzes the ester bond of the fatty acyl group attached at sn-2 position of phospholipids (phospholipase A2 activity) with preference for phosphatidylethanolamines and phosphatidylglycerols over phosphatidylcholines. In draining lymph nodes, selectively hydrolyzes diacyl and alkenyl forms of phosphatidylethanolamines, releasing omega-3 polyunsaturated fatty acids (PUFAs) such as eicosapentaenoate and docosahexaenoate that are precursors of the anti-inflammatory lipid mediators, resolvins. During the resolution phase of acute inflammation drives docosahexaenoate-derived resolvin D1 synthesis, which suppresses dendritic cell activation and T-helper 1 immune response. May act in an autocrine and paracrine manner. Via a mechanism independent of its catalytic activity, promotes differentiation of regulatory T cells (Tregs) and participates in the maintenance of immune tolerance. May contribute to lipid remodeling of cellular membranes and generation of lipid mediators involved in pathogen clearance. Displays bactericidal activity against Gram-positive bacteria by directly hydrolyzing phospholipids of the bacterial membrane. The polypeptide is Group IID secretory phospholipase A2 (PLA2G2D) (Homo sapiens (Human)).